We begin with the raw amino-acid sequence, 1779 residues long: Collagen alpha-1(IV) chain (1779 aa).

The signal sequence occupies residues 1–23; the sequence is MLPFWKRLLYAAVIAGALVGADA. An N-linked (GlcNAc...) asparagine glycan is attached at asparagine 72. Disordered regions lie at residues 89–643, 655–1187, 1200–1285, and 1336–1530; these read GNRG…KPAL, DKGY…LPGL, TGAP…IGPR, and GLPG…RGYE. A compositionally biased stretch (low complexity) spans 144-163; that stretch reads QAGVPGVQGPAGNPGAPGIN. Basic and acidic residues-rich tracts occupy residues 196 to 217 and 249 to 259; these read KGEKGEPAKENGDYAKGEKGEP and PRGEHGLKGEK. Residues 360–369 are compositionally biased toward low complexity; that stretch reads PGLNGLPGNP. The span at 434-443 shows a compositional bias: gly residues; it reads GQKGGAGLPG. Low complexity predominate over residues 531–545; sequence GRPGTPGAAGAPGQK. Residues 724-747 show a composition bias toward basic and acidic residues; sequence PGFHGRDGAKGDKGSFGRSGEKGE. Composition is skewed to low complexity over residues 913–931 and 1015–1036; these read VGPIGPAGVAGPPGVPGID and PGLMGIKGDQGLAGAPGQQGLD. Over residues 1106-1127 the composition is skewed to basic and acidic residues; that stretch reads EKGDQGRSGIDGRDGINGEKGE. The segment covering 1151–1170 has biased composition (low complexity); that stretch reads APGMDGLPGAAGAPGAVGYP. Composition is skewed to basic and acidic residues over residues 1224–1245, 1496–1505, and 1517–1529; these read IRGDKGSQGERGYTGEKGEQGE, ERGEKGERGL, and PKGDRGEPGERGY. Positions 1555–1778 constitute a Collagen IV NC1 domain; it reads GILITRHSQS…SRCQVCMKNS (224 aa). 6 cysteine pairs are disulfide-bonded: cysteine 1570/cysteine 1659, cysteine 1603/cysteine 1656, cysteine 1615/cysteine 1621, cysteine 1678/cysteine 1774, cysteine 1712/cysteine 1771, and cysteine 1724/cysteine 1731.

The protein belongs to the type IV collagen family. As to quaternary structure, trimers of two alpha 1(IV) and one alpha 2(IV) chain. Type IV collagen forms a mesh-like network linked through intermolecular interactions between 7S domains and between NC1 domains. Post-translationally, prolines at the third position of the tripeptide repeating unit (G-X-Y) are hydroxylated in some or all of the chains. In terms of processing, type IV collagens contain numerous cysteine residues which are involved in inter- and intramolecular disulfide bonding. 12 of these, located in the NC1 domain, are conserved in all known type IV collagens.

The protein localises to the secreted. It localises to the extracellular space. It is found in the extracellular matrix. Its subcellular location is the basement membrane. Functionally, collagen type IV is specific for basement membranes. This Drosophila melanogaster (Fruit fly) protein is Collagen alpha-1(IV) chain.